The chain runs to 1078 residues: Rho family-interacting cell polarization regulator 2 (1078 aa).

A phosphoserine mark is found at Ser46 and Ser62. The segment at 80-138 is involved in cell filopodia formation; sequence MHNLGHKNNNTPKEPQPKRVEEVYRALKNGLDEYLEFHQTELDKLTAQLKDMKRNSRLG. Residues 108–137 adopt a coiled-coil conformation; it reads NGLDEYLEFHQTELDKLTAQLKDMKRNSRL. Ser366 carries the phosphoserine modification. Residues 488-508 are compositionally biased toward polar residues; that stretch reads SSLSSQNEGTEDSSSASSRNS. The tract at residues 488 to 534 is disordered; that stretch reads SSLSSQNEGTEDSSSASSRNSLGEDHEPKSHPKSDTVEPGKPGVATR. Residues 509–525 are compositionally biased toward basic and acidic residues; that stretch reads LGEDHEPKSHPKSDTVE. Ser582 is modified (phosphoserine).

It belongs to the RIPOR family. As to quaternary structure, homooligomer; homooligomerization is regulated by RHOC and leads to the formation of concatemers through the association of N- and C-termini. Interacts (phosphorylated form) with 14-3-3 proteins; these interactions occur during myogenic cell differentiation and also induces T cell proliferation arrest. Interacts (phosphorylated form) with HDAC6; this interaction occurs during early myogenic differentiation, prevents HDAC6 to deacetylate tubulin and also induces T cell proliferation arrest. Interacts with DYSF; this interaction occurs during early myogenic differentiation. Interacts with MYOF. Interacts (via active GTP- or inactive GDP-bound forms) with RHOA; this interaction is direct, blocks the loading of GTP to RHOA and decreases upon chemokine CCL19 stimulation in primary T lymphocytes. Interacts with RHOC. Interacts (via phosphorylated form) with YWHAB; this interaction occurs in a chemokine-dependent manner and does not compete for binding of RIPOR2 with RHOA nor blocks inhibition of RIPOR2-mediated RHOA activity. Interacts with YWHAE. Interacts with YWHAQ. Phosphorylated. Chemokine-induced phosphorylation in neutrophils occurs in a PKC- and AKT-dependent manner, resulting in RIPOR2 interaction with YWHAB and stabilization. Phosphorylated by PKCA, AKT1 and MAPKAPK1A; in vitro. In terms of tissue distribution, expressed in the cochlea. Expressed in inner hair cells and outer hair cells and Hensen's cells (at protein level). Expressed in the brain, cerebellum, spinal cord, retina, heart, spleen liver, kidney, bladder, muscle and lung. Expressed in the cochlea of the inner ear.

It is found in the cytoplasm. The protein localises to the cytoskeleton. It localises to the cell projection. Its subcellular location is the filopodium. The protein resides in the stereocilium. It is found in the stereocilium membrane. The protein localises to the apical cell membrane. Its function is as follows. Acts as an inhibitor of the small GTPase RHOA and plays several roles in the regulation of myoblast and hair cell differentiation, lymphocyte T proliferation and neutrophil polarization. Plays a role in fetal mononuclear myoblast differentiation by promoting filopodia and myotube formation. Maintains naive T lymphocytes in a quiescent state and prevents chemokine-induced T lymphocyte responses, such as cell adhesion, polarization and migration. Involved also in the regulation of neutrophil polarization, chemotaxis and adhesion. Required for normal development of inner and outer hair cell stereocilia within the cochlea of the inner ear. Plays a role for maintaining the structural organization of the basal domain of stereocilia. Involved in mechanosensory hair cell function. Required for normal hearing. This chain is Rho family-interacting cell polarization regulator 2, found in Mus musculus (Mouse).